The following is a 306-amino-acid chain: Glutathione transport system permease protein GsiC (306 aa).

Residues 1–8 (MLNYVLKR) are Cytoplasmic-facing. A helical transmembrane segment spans residues 9-29 (LLGLIPTLLIVAVLVFLFVHL). The Periplasmic segment spans residues 30 to 102 (LPGDPARLIA…SRFLPTLWLT (73 aa)). An ABC transmembrane type-1 domain is found at 95 to 292 (FLPTLWLTIT…LEFILINLVV (198 aa)). The chain crosses the membrane as a helical span at residues 103-123 (ITSMIWAVLFGMAIGIAAAVW). Topologically, residues 124–134 (RNRWPDRLGMT) are cytoplasmic. A helical membrane pass occupies residues 135-155 (LAVTGISFPAFALGMLLMQIF). At 156-168 (SVDLGWLPTVGAD) the chain is on the periplasmic side. Residues 169–189 (SWQHYILPSLTLGAAVASVMA) form a helical membrane-spanning segment. Over 190-228 (RFTRSSFVDVLSEDYMRTARAKGVSETWVVLKHGLRNAM) the chain is Cytoplasmic. A helical membrane pass occupies residues 229-249 (IPVVTMMGLQFGFLLGGSIVV). Topologically, residues 250 to 278 (EKVFNWPGLGRLLVDSVDMRDYPVIQAEV) are periplasmic. A helical transmembrane segment spans residues 279–299 (LLFSLEFILINLVVDVLYAAI). Residues 300 to 306 (NPAIRYK) are Cytoplasmic-facing.

This sequence belongs to the binding-protein-dependent transport system permease family. The complex is composed of two ATP-binding proteins (GsiA), two transmembrane proteins (GsiC and GsiD) and a solute-binding protein (GsiB).

It localises to the cell inner membrane. Its function is as follows. Part of the ABC transporter complex GsiABCD involved in glutathione import. Probably responsible for the translocation of the substrate across the membrane. This Salmonella typhimurium (strain LT2 / SGSC1412 / ATCC 700720) protein is Glutathione transport system permease protein GsiC.